Reading from the N-terminus, the 517-residue chain is Zinc finger protein 215 (517 aa).

Positions 48-126 constitute an SCAN box domain; the sequence is RQKFRHFQYL…EDMVTLIEDV (79 aa). The 74-residue stretch at 164 to 237 folds into the KRAB domain; the sequence is VTFKDVVVEF…EKEIPRKTIF (74 aa). 4 consecutive C2H2-type zinc fingers follow at residues 379–401, 407–429, 462–484, and 490–512; these read YECYQCGKAFCRSSSLIRHQIIH, YKCSECGRFFNRRTNLTKHQKLH, YECVNCGKSFNRSSSLIRHQMIH, and FKCKECNKAFNRSSNLVKHQKLH.

This sequence belongs to the krueppel C2H2-type zinc-finger protein family.

The protein resides in the nucleus. Its function is as follows. May be involved in transcriptional regulation. In Pongo abelii (Sumatran orangutan), this protein is Zinc finger protein 215 (ZNF215).